A 186-amino-acid polypeptide reads, in one-letter code: Ribosome-recycling factor (186 aa).

The disordered stretch occupies residues 140–163 (LKKAEKDGDIGQDEGRSLSERVQK).

This sequence belongs to the RRF family.

The protein resides in the cytoplasm. In terms of biological role, responsible for the release of ribosomes from messenger RNA at the termination of protein biosynthesis. May increase the efficiency of translation by recycling ribosomes from one round of translation to another. This chain is Ribosome-recycling factor, found in Rhizobium rhizogenes (strain K84 / ATCC BAA-868) (Agrobacterium radiobacter).